We begin with the raw amino-acid sequence, 120 residues long: FK506-binding protein 1B (120 aa).

Positions 1 to 26 are disordered; that stretch reads MGLEKQTLRMGNGKDHPQPGDPVELN. Residues 20-115 enclose the PPIase FKBP-type domain; that stretch reads GDPVELNYTG…VFEVELLKIK (96 aa).

It belongs to the FKBP-type PPIase family. FKBP1 subfamily.

It catalyses the reaction [protein]-peptidylproline (omega=180) = [protein]-peptidylproline (omega=0). Inhibited by both FK506 and rapamycin. PPIases accelerate the folding of proteins. It catalyzes the cis-trans isomerization of proline imidic peptide bonds in oligopeptides. This Aspergillus fumigatus (strain ATCC MYA-4609 / CBS 101355 / FGSC A1100 / Af293) (Neosartorya fumigata) protein is FK506-binding protein 1B (fpr1B).